The chain runs to 185 residues: Putative sulfur carrier protein YrkF (185 aa).

Cys15 functions as the Cysteine persulfide intermediate in the catalytic mechanism. The Rhodanese domain maps to 101-185 (SDESLNILDV…GMRDWTGKTE (85 aa)).

This sequence belongs to the sulfur carrier protein TusA family.

In Bacillus subtilis (strain 168), this protein is Putative sulfur carrier protein YrkF (yrkF).